We begin with the raw amino-acid sequence, 862 residues long: Cell surface glycoprotein (862 aa).

An N-terminal signal peptide occupies residues 1-34; it reads MTDTQQKIKAVLLTVLMVTSVFAATIAFSGAAAA. Disordered stretches follow at residues 35-60, 101-126, and 200-220; these read SERG…SAGN, ILLE…EGTE, and VNTN…DRDD. The segment covering 43–57 has biased composition (polar residues); the sequence is YTTGPTDGNQDNVDS. Residues 206–220 show a composition bias toward basic and acidic residues; it reads NDDHPNPAADGDRDD. Residues Asn-442, Asn-520, Asn-550, Asn-702, and Asn-761 are each glycosylated (N-linked (GlcNAc...) asparagine). The segment at 752–838 is disordered; sequence LSDENVEPGN…TEEATTEATG (87 aa). Over residues 784–801 the composition is skewed to acidic residues; it reads SLEEEQPATDTPEPDTDT. Low complexity predominate over residues 802-815; the sequence is PEPATDTPEPATDT. The span at 816 to 833 shows a compositional bias: acidic residues; the sequence is PEPDTDTPEPDTETEEAT. The helical transmembrane segment at 838–858 threads the bilayer; it reads GPGFTAAIALIALVAAALLAV. The PGF sorting signal motif lies at 839–841; it reads PGF.

The protein belongs to the halobacterial S-layer protein family. Glycosylated. In terms of processing, cleaved by the archaeosortase ArtA at the C-terminus, with removal of a short hydrophobic segment. Post-translationally, lipidation.

It is found in the secreted. The protein localises to the cell wall. It localises to the S-layer. Its subcellular location is the cell membrane. Functionally, S-layer protein. The S-layer is a paracrystalline mono-layered assembly of proteins which coat the surface of the cell. In Haloarcula japonica (strain ATCC 49778 / DSM 6131 / JCM 7785 / NBRC 101032 / NCIMB 13157 / TR-1), this protein is Cell surface glycoprotein.